Reading from the N-terminus, the 541-residue chain is Ascorbate transporter, chloroplastic (541 aa).

The transit peptide at 1–28 directs the protein to the chloroplast; sequence MALGGLISNRNFGSFIGSGNGCQRLGKS. 11 helical membrane-spanning segments follow: residues 133–155, 170–190, 199–219, 221–241, 263–283, 286–306, 352–372, 390–410, 430–450, 481–501, and 515–535; these read VIVLLCFSSFLLCNMDRVNMSIA, VGLIQSSFFWGYLLTQILGGI, VVLGFGVVWWSFATIMTPIAA, LGLPFLLVVRAFMGIGEGVAM, LVYSGMYLGSVTGLAFSPMLI, FGWPSVFYSFGSLGSIWFLLW, VWALIISHFCHNWGTFILLTW, LLCVLPWLTMAVFANIGGWIA, IGFLGPAFFLSQLSHVKTPAM, AGVLLGLSNTAGVLAGVFGTA, and VFKVAVALYLIGTLVWNLFAT.

This sequence belongs to the major facilitator superfamily. Sodium/anion cotransporter (TC 2.A.1.14) family. As to expression, expressed in stems, developing siliques, leaf mesophyll cells and sepals of mature flowers. Not detected in roots. Detected in palisade tissue rather than spongy tissue from the leaves.

It is found in the plastid. The protein resides in the chloroplast inner membrane. Its activity is regulated as follows. Insensitive to dehydroascorbate, p-isoascorbate, inorganic phosphate, glutamate, ATP, p-aminohippuric acid or tetraethylammonium. Its function is as follows. Inorganic phosphate and probable anion transporter. Ascorbate transporter bridging the chloroplast envelope. Transports ascorbate from the cytosol into the chloroplast. Requires chloride ions and the presence of an electrochemical potential across the membrane for activity. This is Ascorbate transporter, chloroplastic (PHT4;4) from Arabidopsis thaliana (Mouse-ear cress).